We begin with the raw amino-acid sequence, 225 residues long: UPF0758 protein SEQ_1136 (225 aa).

Positions 102-224 constitute an MPN domain; the sequence is PVLSSAQVAE…YYSFREKSDL (123 aa). The Zn(2+) site is built by histidine 173, histidine 175, and aspartate 186. A JAMM motif motif is present at residues 173 to 186; sequence HNHPSGLTKPSAND.

The protein belongs to the UPF0758 family.

The chain is UPF0758 protein SEQ_1136 from Streptococcus equi subsp. equi (strain 4047).